Here is a 176-residue protein sequence, read N- to C-terminus: Cathelicidin-2 (176 aa).

The N-terminal stretch at 1-29 is a signal peptide; sequence METQGASLSLGRWSLWLLLLGLVVPLASA. Q30 is subject to Pyrrolidone carboxylic acid. The propeptide occupies 30-130; sequence QALSYREAVL…DINCNELQSV (101 aa). Disulfide bonds link C85/C96 and C107/C124. Positions 135–176 are disordered; sequence PIRRPPIRPPFNPPFRPPVRPPFRPPFRPPFRPPIGPFPGRR. Residues 141–176 show a composition bias toward pro residues; it reads IRPPFNPPFRPPVRPPFRPPFRPPFRPPIGPFPGRR. A Proline amide modification is found at P173. Positions 174–176 are cleaved as a propeptide — removed in mature form; the sequence is GRR.

It belongs to the cathelicidin family. Post-translationally, elastase is responsible for its maturation.

The protein resides in the secreted. In terms of biological role, binds to the lipid A moiety of bacterial lipopolysaccharides (LPS), a glycolipid present in the outer membrane of all Gram-negative bacteria. Shows a potent antimicrobial activity against the Gram-negative bacteria E.coli, S.typhimurium and P.aeruginosa. Less active against the Gram-positive bacteria S.aureus, L.monocytogenes and B.subtilis. This is Cathelicidin-2 (CATHL2) from Capra hircus (Goat).